Reading from the N-terminus, the 298-residue chain is Probable endonuclease 4 (298 aa).

Histidine 69, histidine 110, glutamate 145, aspartate 179, histidine 182, histidine 214, aspartate 227, histidine 229, and glutamate 259 together coordinate Zn(2+).

This sequence belongs to the AP endonuclease 2 family. It depends on Zn(2+) as a cofactor.

It catalyses the reaction Endonucleolytic cleavage to 5'-phosphooligonucleotide end-products.. In terms of biological role, endonuclease IV plays a role in DNA repair. It cleaves phosphodiester bonds at apurinic or apyrimidinic (AP) sites, generating a 3'-hydroxyl group and a 5'-terminal sugar phosphate. The sequence is that of Probable endonuclease 4 from Geobacillus sp. (strain WCH70).